The following is a 117-amino-acid chain: Small ribosomal subunit protein bS16 (117 aa).

Residues 81 to 90 (LKKRPNRNNP) show a composition bias toward basic residues. Residues 81-117 (LKKRPNRNNPHKGQPGKKAQERISAAKQVAEAESAPV) form a disordered region.

Belongs to the bacterial ribosomal protein bS16 family.

The polypeptide is Small ribosomal subunit protein bS16 (Bartonella quintana (strain Toulouse) (Rochalimaea quintana)).